Reading from the N-terminus, the 692-residue chain is UvrABC system protein C (692 aa).

Residues 16–95 enclose the GIY-YIG domain; that stretch reads ETPGVYRFRD…IKEFDPRFNV (80 aa). The UVR domain maps to 208-243; that stretch reads GRYLRRLEREMRAAAEAQEYERAARLRDDIGALRRA. Residues 492 to 511 are disordered; it reads GELEEYPGAPTGDDEAPETG.

Belongs to the UvrC family. Interacts with UvrB in an incision complex.

The protein resides in the cytoplasm. Its function is as follows. The UvrABC repair system catalyzes the recognition and processing of DNA lesions. UvrC both incises the 5' and 3' sides of the lesion. The N-terminal half is responsible for the 3' incision and the C-terminal half is responsible for the 5' incision. This Parafrankia sp. (strain EAN1pec) protein is UvrABC system protein C.